Here is a 94-residue protein sequence, read N- to C-terminus: Acylphosphatase (94 aa).

Residues 6 to 92 (RVHVWIRGRV…EGLPTFEIRP (87 aa)) enclose the Acylphosphatase-like domain. Catalysis depends on residues Arg-21 and Asn-39.

The protein belongs to the acylphosphatase family.

It carries out the reaction an acyl phosphate + H2O = a carboxylate + phosphate + H(+). In Synechococcus sp. (strain JA-2-3B'a(2-13)) (Cyanobacteria bacterium Yellowstone B-Prime), this protein is Acylphosphatase (acyP).